The sequence spans 283 residues: Acetylglutamate kinase (283 aa).

Residues 63–64 (GG), R85, and N178 each bind substrate.

The protein belongs to the acetylglutamate kinase family. ArgB subfamily.

It localises to the cytoplasm. The catalysed reaction is N-acetyl-L-glutamate + ATP = N-acetyl-L-glutamyl 5-phosphate + ADP. Its pathway is amino-acid biosynthesis; L-arginine biosynthesis; N(2)-acetyl-L-ornithine from L-glutamate: step 2/4. Functionally, catalyzes the ATP-dependent phosphorylation of N-acetyl-L-glutamate. This Prochlorococcus marinus (strain MIT 9215) protein is Acetylglutamate kinase.